The primary structure comprises 653 residues: Protease 1 (653 aa).

Residues 1–20 constitute a signal peptide (or 27); it reads MKRICGSLLLLGLSISAALA. The propeptide occupies 21–205; that stretch reads APASRPAAFD…RRLAAASGEK (185 aa). 3 disulfides stabilise this stretch: C211/C421, C217/C285, and C241/C263. Catalysis depends on charge relay system residues H262, D318, and S399. The 80-residue stretch at 474–553 folds into the PKD domain; the sequence is NTPPVANFTS…TNTKTGSVTV (80 aa). The propeptide at 474-653 is thr/Ser-rich; that stretch reads NTPPVANFTS…AAQRAPGSCG (180 aa). The P/Homo B domain maps to 555 to 653; it reads GGPGAQTYTN…AAQRAPGSCG (99 aa).

It belongs to the peptidase S1 family. Post-translationally, three disulfide bonds are present.

It localises to the secreted. It catalyses the reaction Preferential cleavage: Lys-|-Xaa, including Lys-|-Pro.. This Achromobacter lyticus protein is Protease 1.